Reading from the N-terminus, the 235-residue chain is Aspartate/glutamate leucyltransferase (235 aa).

Belongs to the R-transferase family. Bpt subfamily.

The protein localises to the cytoplasm. The catalysed reaction is N-terminal L-glutamyl-[protein] + L-leucyl-tRNA(Leu) = N-terminal L-leucyl-L-glutamyl-[protein] + tRNA(Leu) + H(+). It carries out the reaction N-terminal L-aspartyl-[protein] + L-leucyl-tRNA(Leu) = N-terminal L-leucyl-L-aspartyl-[protein] + tRNA(Leu) + H(+). Functionally, functions in the N-end rule pathway of protein degradation where it conjugates Leu from its aminoacyl-tRNA to the N-termini of proteins containing an N-terminal aspartate or glutamate. In Pseudomonas fluorescens (strain ATCC BAA-477 / NRRL B-23932 / Pf-5), this protein is Aspartate/glutamate leucyltransferase.